Reading from the N-terminus, the 200-residue chain is NAD(P)H dehydrogenase (quinone) (200 aa).

Positions 4–191 (VLVLYYSSYG…DIARYQGKHV (188 aa)) constitute a Flavodoxin-like domain. FMN-binding positions include 10–15 (SSYGHV) and 79–81 (TRF). Y12 contributes to the NAD(+) binding site. W99 contributes to the substrate binding site. Residues 114–120 (STGTQHG) and H135 each bind FMN.

Belongs to the WrbA family. It depends on FMN as a cofactor.

The enzyme catalyses a quinone + NADH + H(+) = a quinol + NAD(+). It carries out the reaction a quinone + NADPH + H(+) = a quinol + NADP(+). The sequence is that of NAD(P)H dehydrogenase (quinone) from Burkholderia ambifaria (strain MC40-6).